Here is a 244-residue protein sequence, read N- to C-terminus: MSVLDLNALNALPKVERILALAETNAKLEKLSAEERVAWALENLPGEYALSSSFGIQAAVSLHLVNQLRPDIPVILTDTGYLFPETYQFIDELTDKLKLNLKVYRAQESAAWQEARYGKLWEQGVEGIEKYNEINKVEPMNRALKELNTQTWFAGLRREQSGSRATLPVLAIQRGVFKVLPIIDWDNRTVYQYLQKHGLKYHPLWDQGYLSVGDTHTTRKWEPGMAEEETRFFGLKRECGLHEG.

Cys-239 serves as the catalytic Nucleophile; cysteine thiosulfonate intermediate.

The protein belongs to the PAPS reductase family. CysH subfamily.

It localises to the cytoplasm. It catalyses the reaction [thioredoxin]-disulfide + sulfite + adenosine 3',5'-bisphosphate + 2 H(+) = [thioredoxin]-dithiol + 3'-phosphoadenylyl sulfate. It functions in the pathway sulfur metabolism; hydrogen sulfide biosynthesis; sulfite from sulfate: step 3/3. In terms of biological role, catalyzes the formation of sulfite from phosphoadenosine 5'-phosphosulfate (PAPS) using thioredoxin as an electron donor. This Klebsiella pneumoniae (strain 342) protein is Phosphoadenosine 5'-phosphosulfate reductase.